We begin with the raw amino-acid sequence, 334 residues long: N-acetyl-gamma-glutamyl-phosphate reductase (334 aa).

Cys-142 is a catalytic residue.

This sequence belongs to the NAGSA dehydrogenase family. Type 1 subfamily.

It is found in the cytoplasm. It carries out the reaction N-acetyl-L-glutamate 5-semialdehyde + phosphate + NADP(+) = N-acetyl-L-glutamyl 5-phosphate + NADPH + H(+). It participates in amino-acid biosynthesis; L-arginine biosynthesis; N(2)-acetyl-L-ornithine from L-glutamate: step 3/4. In terms of biological role, catalyzes the NADPH-dependent reduction of N-acetyl-5-glutamyl phosphate to yield N-acetyl-L-glutamate 5-semialdehyde. In Pelodictyon phaeoclathratiforme (strain DSM 5477 / BU-1), this protein is N-acetyl-gamma-glutamyl-phosphate reductase.